The primary structure comprises 265 residues: uncharacterized protein (265 aa).

2 consecutive CBS domains span residues 9-64 and 67-126; these read MTKK…EKVE and MTKR…TTPK.

This is an uncharacterized protein from Methanocaldococcus jannaschii (strain ATCC 43067 / DSM 2661 / JAL-1 / JCM 10045 / NBRC 100440) (Methanococcus jannaschii).